We begin with the raw amino-acid sequence, 236 residues long: Orotidine 5'-phosphate decarboxylase (236 aa).

Substrate-binding positions include D16, K38, 65–74 (DLKYHDIPNT), T124, R185, Q194, G214, and R215. The active-site Proton donor is K67.

The protein belongs to the OMP decarboxylase family. Type 1 subfamily. In terms of assembly, homodimer.

It catalyses the reaction orotidine 5'-phosphate + H(+) = UMP + CO2. Its pathway is pyrimidine metabolism; UMP biosynthesis via de novo pathway; UMP from orotate: step 2/2. Its function is as follows. Catalyzes the decarboxylation of orotidine 5'-monophosphate (OMP) to uridine 5'-monophosphate (UMP). The polypeptide is Orotidine 5'-phosphate decarboxylase (Hydrogenovibrio crunogenus (strain DSM 25203 / XCL-2) (Thiomicrospira crunogena)).